The sequence spans 281 residues: NADPH-dependent 7-cyano-7-deazaguanine reductase (281 aa).

88-90 serves as a coordination point for substrate; that stretch reads IES. 90–91 contributes to the NADPH binding site; the sequence is SK. The active-site Thioimide intermediate is Cys189. Asp196 acts as the Proton donor in catalysis. 228–229 serves as a coordination point for substrate; that stretch reads HE. 257–258 contacts NADPH; sequence RG.

It belongs to the GTP cyclohydrolase I family. QueF type 2 subfamily. Homodimer.

The protein localises to the cytoplasm. The catalysed reaction is 7-aminomethyl-7-carbaguanine + 2 NADP(+) = 7-cyano-7-deazaguanine + 2 NADPH + 3 H(+). The protein operates within tRNA modification; tRNA-queuosine biosynthesis. In terms of biological role, catalyzes the NADPH-dependent reduction of 7-cyano-7-deazaguanine (preQ0) to 7-aminomethyl-7-deazaguanine (preQ1). In Sodalis glossinidius (strain morsitans), this protein is NADPH-dependent 7-cyano-7-deazaguanine reductase.